The primary structure comprises 547 residues: Chaperonin GroEL 1 (547 aa).

ATP contacts are provided by residues 30-33, Lys51, 87-91, Gly415, and Asp494; these read TLGP and DGTTT. The tract at residues 524–547 is disordered; that stretch reads PKGKAKGGGAGAGMPDYGGDDMDY.

It belongs to the chaperonin (HSP60) family. As to quaternary structure, forms a cylinder of 14 subunits composed of two heptameric rings stacked back-to-back. Interacts with the co-chaperonin GroES.

It localises to the cytoplasm. The enzyme catalyses ATP + H2O + a folded polypeptide = ADP + phosphate + an unfolded polypeptide.. Its function is as follows. Together with its co-chaperonin GroES, plays an essential role in assisting protein folding. The GroEL-GroES system forms a nano-cage that allows encapsulation of the non-native substrate proteins and provides a physical environment optimized to promote and accelerate protein folding. The polypeptide is Chaperonin GroEL 1 (Myxococcus xanthus (strain DK1622)).